Reading from the N-terminus, the 261-residue chain is Triosephosphate isomerase (261 aa).

Substrate is bound at residue 10–12; sequence NWK. The active-site Electrophile is histidine 100. The active-site Proton acceptor is the glutamate 172. Substrate-binding positions include glycine 178, serine 218, and 239 to 240; that span reads GG.

The protein belongs to the triosephosphate isomerase family. In terms of assembly, homodimer.

Its subcellular location is the cytoplasm. It catalyses the reaction D-glyceraldehyde 3-phosphate = dihydroxyacetone phosphate. It functions in the pathway carbohydrate biosynthesis; gluconeogenesis. Its pathway is carbohydrate degradation; glycolysis; D-glyceraldehyde 3-phosphate from glycerone phosphate: step 1/1. In terms of biological role, involved in the gluconeogenesis. Catalyzes stereospecifically the conversion of dihydroxyacetone phosphate (DHAP) to D-glyceraldehyde-3-phosphate (G3P). This Mycobacterium leprae (strain TN) protein is Triosephosphate isomerase.